Reading from the N-terminus, the 232-residue chain is Flagellar L-ring protein (232 aa).

Positions 1–21 are cleaved as a signal peptide; sequence MQKNAAHTYAISSLLVLSLTG. Cys-22 carries the N-palmitoyl cysteine lipid modification. Cys-22 is lipidated: S-diacylglycerol cysteine.

It belongs to the FlgH family. The basal body constitutes a major portion of the flagellar organelle and consists of four rings (L,P,S, and M) mounted on a central rod.

Its subcellular location is the cell outer membrane. The protein resides in the bacterial flagellum basal body. Assembles around the rod to form the L-ring and probably protects the motor/basal body from shearing forces during rotation. In Escherichia coli O7:K1 (strain IAI39 / ExPEC), this protein is Flagellar L-ring protein.